The primary structure comprises 493 residues: tRNA (uracil-5-)-methyltransferase homolog B (493 aa).

The N-terminal 14 residues, 1 to 14 (MHNPRLFLSRAGFF), are a transit peptide targeting the mitochondrion. Gln312, Glu362, and Asn412 together coordinate S-adenosyl-L-methionine. Cys440 acts as the Nucleophile in catalysis. Glu486 (proton acceptor) is an active-site residue.

It belongs to the class I-like SAM-binding methyltransferase superfamily. RNA M5U methyltransferase family.

The protein resides in the mitochondrion matrix. It catalyses the reaction uridine(54) in tRNA + S-adenosyl-L-methionine = 5-methyluridine(54) in tRNA + S-adenosyl-L-homocysteine + H(+). It carries out the reaction a uridine in 12S rRNA + S-adenosyl-L-methionine = a 5-methyluridine in 12S rRNA + S-adenosyl-L-homocysteine + H(+). Its function is as follows. Mitochondrial S-adenosyl-L-methionine-dependent methyltransferase that catalyzes the formation of 5-methyl-uridine in tRNAs and 12S rRNA. Catalyzes the methylation of uridine at position 54 (m5U54) in all tRNAs. Specifically methylates the uridine in position 425 of 12S rRNA (m5U425). Does not affect RNA stability or mitochondrial translation. The protein is tRNA (uracil-5-)-methyltransferase homolog B of Mus musculus (Mouse).